The chain runs to 453 residues: MSNDLPTKKDLVKWDQEDALNWTRGEYEIPNSKACGGEADGKAIYFCGNSLGLLNKKARQHIMEELDVWSTSSVTGHFNHPYQRPWKHVDEPLTPHLAKLVGAREEEVAHTSTLTSNMHNLFTSFYQPTEKRWKIVIEKGSFPSDWYAVHSHPRLHDKVLRPEQIDNAIIALVPREGEDTLRTEDILKVLDDNKDSIAIVWLPLVQYYTGQLFDISSISPKVHEIGALLGLDMAHGIGNVECKLNEWNVDFAVWCTYKYLNAGPAAIGGFYIRSGLEDGGRRLAGWWGNDARTRFHMSPNFQPTPGAKGYQHSCTPVFSSIPLLATLQLIEAVGFSNMVEKARRLTGTLEALLKASRYYVHPADPKGKIGFKIITPAAPYRGTQLSLVILPEEEHVMPKVFDRMLRKGLVGDERKPSVIRLSPVVLYNTFEEVGRAVEIVEEALEEEEEERKR.

Pyridoxal 5'-phosphate-binding positions include Leu-114, Thr-115, 142-145, Asp-232, His-235, and Tyr-257; that span reads FPSD. Lys-258 carries the N6-(pyridoxal phosphate)lysine modification. Residue Trp-286 participates in pyridoxal 5'-phosphate binding.

It belongs to the kynureninase family. In terms of assembly, homodimer. It depends on pyridoxal 5'-phosphate as a cofactor.

It localises to the cytoplasm. It carries out the reaction L-kynurenine + H2O = anthranilate + L-alanine + H(+). The catalysed reaction is 3-hydroxy-L-kynurenine + H2O = 3-hydroxyanthranilate + L-alanine + H(+). Its pathway is amino-acid degradation; L-kynurenine degradation; L-alanine and anthranilate from L-kynurenine: step 1/1. It participates in cofactor biosynthesis; NAD(+) biosynthesis; quinolinate from L-kynurenine: step 2/3. In terms of biological role, catalyzes the cleavage of L-kynurenine (L-Kyn) and L-3-hydroxykynurenine (L-3OHKyn) into anthranilic acid (AA) and 3-hydroxyanthranilic acid (3-OHAA), respectively. This is Kynureninase from Cryptococcus neoformans var. neoformans serotype D (strain B-3501A) (Filobasidiella neoformans).